The sequence spans 453 residues: MDQTSIQASSGDAAAADQLKYMPGFGNDFETESLPGALPQGQNSPQKCNYGLYAEQLSGSPFTAPRGTNERSWLYRIRPSVRHTRRFSNASYPLWKTAPCLDEHSLPLGQLRWDPIPPPEERLNFLEGVRTITTAGDATTQVGMSAHAYVFNEDMVDDYFFNADGELLIVPQLGALRVFTEMGIMDVEPSEICLVPRGMMFKILTSGKQTAWRGYICENYGAKFTLPERGPIGANCLANPRDFKTPVAAYEDKEKPCRVHVKWCGKFYVTEIGHSPLDVVAWHGNYAPFKYDLRTFSPVGAILFDHPDPSIFSVLTAPTEDAGTANVDFVIFPPRWLVAEHTFRPPWYHRNIMSEFMGLIHGQYDAKEEGFVPGGMSLHNMMLPHGPDALAFEKAANAELKPVKLDHTMAFMFETRYPQQLTKYAAELETLQDDYLECWDGLERKFDGNPGIK.

His-306 acts as the Proton acceptor in catalysis. 2 residues coordinate Fe cation: His-349 and Glu-355. Residues Tyr-364 and His-385 each coordinate homogentisate. His-385 provides a ligand contact to Fe cation.

It belongs to the homogentisate dioxygenase family. In terms of assembly, hexamer; dimer of trimers. Fe cation is required as a cofactor.

The catalysed reaction is homogentisate + O2 = 4-maleylacetoacetate + H(+). Its pathway is amino-acid degradation; L-phenylalanine degradation; acetoacetate and fumarate from L-phenylalanine: step 4/6. Its function is as follows. Involved in the catabolism of homogentisate (2,5-dihydroxyphenylacetate or 2,5-OH-PhAc), a central intermediate in the degradation of phenylalanine and tyrosine. Catalyzes the oxidative ring cleavage of the aromatic ring of homogentisate to yield maleylacetoacetate. This Rhizobium etli (strain CIAT 652) protein is Homogentisate 1,2-dioxygenase.